We begin with the raw amino-acid sequence, 325 residues long: E3 ubiquitin-protein ligase SIAH2 (325 aa).

The segment covering 1-15 (MSRPSSTGPSANKPC) has biased composition (polar residues). A disordered region spans residues 1–43 (MSRPSSTGPSANKPCSKQPPPPQTPHAPSPAAPPAAATISAAG). Serine 6 is subject to Phosphoserine. Position 16 is a phosphoserine; by DYRK2 (serine 16). Positions 17–33 (KQPPPPQTPHAPSPAAP) are enriched in pro residues. Threonine 24 carries the post-translational modification Phosphothreonine; by MAPK14. Position 29 is a phosphoserine; by DYRK2 and MAPK14 (serine 29). Residues 34 to 43 (PAAATISAAG) are compositionally biased toward low complexity. Serine 69 carries the phosphoserine; by DYRK2 modification. Residues 81–116 (CPVCFDYVLPPILQCQAGHLVCNQCRQKLSCCPTCR) form an RING-type zinc finger. The residue at position 120 (threonine 120) is a Phosphothreonine; by DYRK2. The SBD stretch occupies residues 131–323 (VASAVLFPCK…LGINVTISTC (193 aa)). The segment at 134 to 194 (AVLFPCKYAT…VMSHLMHAHK (61 aa)) adopts an SIAH-type zinc-finger fold. The Zn(2+) site is built by cysteine 139, cysteine 146, histidine 158, cysteine 162, cysteine 169, cysteine 176, histidine 188, and histidine 193.

This sequence belongs to the SINA (Seven in absentia) family. As to quaternary structure, homodimer. Interacts with UBE2E2. Interacts with VAV1, without mediating its ubiquitin-mediated degradation. Interacts with CACYBP/SIP. Probable component of some large E3 complex possibly composed of UBE2D1, SIAH2, CACYBP/SIP, SKP1, APC and TBL1X. Interacts with UBE2I. Interacts with PEG10, which may inhibit its activity. Interacts with EGLN2 and SNCAIP. Interacts with DYRK2. Interacts with PEG3. Interacts with NR1D1 and NR1D2. Interacts with DCC. Interacts with AXIN1. Phosphorylated at Ser-29 by DYRK2; this increases the ubiquitin ligase activity and promotes degradation of EGLN3. Phosphorylated at Thr-24 and Ser-29 by MAPK14, which mediates the degradation by the proteasome of EGLN3. Widely expressed at low level in embryos and adults. Expressed in a specific population of germ cells within both the mouse ovary and testis. Absent in primordial oocytes but expressed in all growing oocytes, coincident with their recruitment from the pool of quiescent cells. Its level of expression increases as the oocytes mature. Expressed in Graafian follicles and in fertilized zygotes up until the two cell stage, a time of extensive maternal transcript degradation and zygotic gene activation. Expressed in the testis from postmeiotic spermatids.

The protein resides in the cytoplasm. Its subcellular location is the nucleus. It carries out the reaction S-ubiquitinyl-[E2 ubiquitin-conjugating enzyme]-L-cysteine + [acceptor protein]-L-lysine = [E2 ubiquitin-conjugating enzyme]-L-cysteine + N(6)-ubiquitinyl-[acceptor protein]-L-lysine.. It participates in protein modification; protein ubiquitination. Its function is as follows. E3 ubiquitin-protein ligase that mediates ubiquitination and subsequent proteasomal degradation of target proteins. E3 ubiquitin ligases accept ubiquitin from an E2 ubiquitin-conjugating enzyme in the form of a thioester and then directly transfers the ubiquitin to targeted substrates. Mediates E3 ubiquitin ligase activity either through direct binding to substrates or by functioning as the essential RING domain subunit of larger E3 complexes. Mediates ubiquitination and proteasomal degradation of DYRK2 in response to hypoxia. Promotes monoubiquitination of SNCA. Triggers the ubiquitin-mediated degradation of many substrates, including proteins involved in transcription regulation (GPS2, POU2AF1, PML, NCOR1), a cell surface receptor (DCC), an antiapoptotic protein (BAG1), and a protein involved in synaptic vesicle function in neurons (SYP). It is thereby involved in apoptosis, tumor suppression, cell cycle, transcription and signaling processes. Has some overlapping function with SIAH1. Triggers the ubiquitin-mediated degradation of TRAF2, whereas SIAH1 does not. Regulates cellular clock function via ubiquitination of the circadian transcriptional repressors NR1D1 and NR1D2 leading to their proteasomal degradation. Plays an important role in mediating the rhythmic degradation/clearance of NR1D1 and NR1D2 contributing to their circadian profile of protein abundance. Mediates ubiquitination and degradation of EGLN2 and EGLN3 in response to the unfolded protein response (UPR), leading to their degradation and subsequent stabilization of ATF4. Also part of the Wnt signaling pathway in which it mediates the Wnt-induced ubiquitin-mediated proteasomal degradation of AXIN1. This Mus musculus (Mouse) protein is E3 ubiquitin-protein ligase SIAH2 (Siah2).